The sequence spans 60 residues: Temporin-CG1 (60 aa).

The signal sequence occupies residues 1-22 (MFTLKKSLLLLFFLATINLSLC). The propeptide at 23 to 43 (EQERNAEEERRDDDERNAEVE) is removed in mature form.

As to expression, expressed by the skin glands.

The protein localises to the secreted. Its function is as follows. Antimicrobial peptide active against a variety of Gram-positive and some Gram-negative bacterial strains. Has antifungal activity against a slime mold isolate. Has weak hemolytic activity against human erythrocytes. The protein is Temporin-CG1 of Amolops chunganensis (Chungan torrent frog).